The chain runs to 279 residues: Ribosome maturation factor RimP (279 aa).

The segment at 197–279 (LAEEGEPEEQ…GAPALRPTPK (83 aa)) is disordered. Residues 199–210 (EEGEPEEQEEGG) show a composition bias toward acidic residues.

Belongs to the RimP family.

It is found in the cytoplasm. Required for maturation of 30S ribosomal subunits. The protein is Ribosome maturation factor RimP of Methylocella silvestris (strain DSM 15510 / CIP 108128 / LMG 27833 / NCIMB 13906 / BL2).